Consider the following 55-residue polypeptide: Large ribosomal subunit protein bL33 (55 aa).

The protein belongs to the bacterial ribosomal protein bL33 family.

This Chelativorans sp. (strain BNC1) protein is Large ribosomal subunit protein bL33.